Reading from the N-terminus, the 144-residue chain is MRLLALFAFAVAVVSAQRNQMCQQPRTQGSCDASNQITKFFYTGSGCTSAPVCSDTDGGYGTEDECIQACTVQGGHHNEGAGEEGCSGDPPRGDCGGQVEERYYFDSTTRTCQTFEYRGCSSGNPDNSYETEIECEIACPSASS.

A signal peptide spans 1–16; that stretch reads MRLLALFAFAVAVVSA. Glutamine 17 carries the pyrrolidone carboxylic acid modification. Residues 18-73 form the BPTI/Kunitz inhibitor 1 domain; the sequence is RNQMCQQPRTQGSCDASNQITKFFYTGSGCTSAPVCSDTDGGYGTEDECIQACTVQ. 3 cysteine pairs are disulfide-bonded: cysteine 22–cysteine 70, cysteine 31–cysteine 53, and cysteine 47–cysteine 66. The segment at 74–85 is linker; the sequence is GGHHNEGAGEEG. The BPTI/Kunitz inhibitor domain maps to 86–139; sequence CSGDPPRGDCGGQVEERYYFDSTTRTCQTFEYRGCSSGNPDNSYETEIECEIAC. 3 disulfide bridges follow: cysteine 86-cysteine 139, cysteine 95-cysteine 120, and cysteine 112-cysteine 135. Residues 92 to 94 carry the Cell attachment site motif; the sequence is RGD.

The N-terminus is blocked. Expressed in salivary glands.

The protein resides in the cytoplasmic vesicle. The protein localises to the secretory vesicle. It is found in the secreted. Its function is as follows. Tick salivary thrombin inhibitor that plays an important part in the anti-hemostatic strategy of ticks. In Argas monolakensis (Mono lake bird tick), this protein is Monobin.